A 159-amino-acid polypeptide reads, in one-letter code: Keratin-associated protein 6-2 (159 aa).

The segment at 11 to 147 is 66 X 2 AA repeats of G-[YCGS]; it reads GYGCGYGSGY…SYYRSGCCGY (137 aa).

This sequence belongs to the KRTAP type 6 family. In terms of assembly, interacts with hair keratins. In terms of tissue distribution, expressed in skin during two hair growth cycles. Expression restricted to the cortical cells of hair follicles, appearing first in the cortical cells processing the flat nuclei located a few cells above the dermal papilla.

Its function is as follows. In the hair cortex, hair keratin intermediate filaments are embedded in an interfilamentous matrix, consisting of hair keratin-associated proteins (KRTAP), which are essential for the formation of a rigid and resistant hair shaft through their extensive disulfide bond cross-linking with abundant cysteine residues of hair keratins. The matrix proteins include the high-sulfur and high-glycine-tyrosine keratins. The chain is Keratin-associated protein 6-2 from Mus musculus (Mouse).